An 84-amino-acid chain; its full sequence is Beta-defensin 119 (84 aa).

Positions 1–21 are cleaved as a signal peptide; it reads MKLLYLFLAILLAIEEPVISG. Disulfide bonds link cysteine 28/cysteine 55, cysteine 35/cysteine 49, and cysteine 39/cysteine 56.

This sequence belongs to the beta-defensin family.

The protein resides in the secreted. Functionally, has antibacterial activity. This is Beta-defensin 119 (DEFB119) from Gorilla gorilla gorilla (Western lowland gorilla).